Here is a 352-residue protein sequence, read N- to C-terminus: Cyclin-dependent kinase-like 1 (352 aa).

The Protein kinase domain occupies 4-287 (YEKIGKIGEG…CEQLLQHPYF (284 aa)). Residues 10–18 (IGEGSYGVV) and Lys33 contribute to the ATP site. A [NKR]KIAxRE motif is present at residues 45–51 (KKIALRE). Asp126 (proton acceptor) is an active-site residue.

Belongs to the protein kinase superfamily. CMGC Ser/Thr protein kinase family. CDC2/CDKX subfamily.

It localises to the cytoplasm. The protein resides in the nucleus. It catalyses the reaction L-seryl-[protein] + ATP = O-phospho-L-seryl-[protein] + ADP + H(+). It carries out the reaction L-threonyl-[protein] + ATP = O-phospho-L-threonyl-[protein] + ADP + H(+). The polypeptide is Cyclin-dependent kinase-like 1 (Mus musculus (Mouse)).